An 871-amino-acid chain; its full sequence is Zinc finger and BTB domain-containing protein 10 (871 aa).

Disordered stretches follow at residues 1 to 156 (MSFS…FNGR) and 177 to 228 (GASL…AGEG). Residues 14–26 (RGGGLVTASGGGS) show a composition bias toward gly residues. The span at 27-37 (TNNNAGGEASA) shows a compositional bias: low complexity. Over residues 39-56 (PPQPQPRQPPPPAPPALQ) the composition is skewed to pro residues. Over residues 65–76 (EEVELEGLEPQD) the composition is skewed to acidic residues. The segment covering 77 to 103 (LEASAGPAAGAAEEAKELLLPQDAGGP) has biased composition (low complexity). Arg-126 bears the Omega-N-methylarginine mark. Gly residues predominate over residues 126-135 (RGGGGGGLGN). Position 210 is a phosphoserine (Ser-210). Lys-245 is covalently cross-linked (Glycyl lysine isopeptide (Lys-Gly) (interchain with G-Cter in SUMO2)). A BTB domain is found at 364-433 (CDVSIVVSGK…LYSGNLVLTS (70 aa)). Glycyl lysine isopeptide (Lys-Gly) (interchain with G-Cter in SUMO2) cross-links involve residues Lys-468, Lys-483, and Lys-497. Position 565 is a phosphoserine (Ser-565). Residues Lys-573, Lys-672, Lys-684, Lys-696, and Lys-706 each participate in a glycyl lysine isopeptide (Lys-Gly) (interchain with G-Cter in SUMO2) cross-link. C2H2-type zinc fingers lie at residues 722–744 (LKCP…LLIH) and 750–772 (FSCD…SLVH). Residues 812–871 (SQPGGQEGVDQGQDTEFPRDEEYEENEVGEADEELVDDGEDQNDPSRWDESGEVCMSLDD) are disordered. Acidic residues predominate over residues 830–854 (RDEEYEENEVGEADEELVDDGEDQN).

Its subcellular location is the nucleus. Functionally, may be involved in transcriptional regulation. The polypeptide is Zinc finger and BTB domain-containing protein 10 (ZBTB10) (Homo sapiens (Human)).